The chain runs to 202 residues: ATP-dependent Clp protease proteolytic subunit 3 (202 aa).

Catalysis depends on S93, which acts as the Nucleophile. Residue H118 is part of the active site.

The protein belongs to the peptidase S14 family. As to quaternary structure, fourteen ClpP subunits assemble into 2 heptameric rings which stack back to back to give a disk-like structure with a central cavity, resembling the structure of eukaryotic proteasomes.

The protein resides in the cytoplasm. It carries out the reaction Hydrolysis of proteins to small peptides in the presence of ATP and magnesium. alpha-casein is the usual test substrate. In the absence of ATP, only oligopeptides shorter than five residues are hydrolyzed (such as succinyl-Leu-Tyr-|-NHMec, and Leu-Tyr-Leu-|-Tyr-Trp, in which cleavage of the -Tyr-|-Leu- and -Tyr-|-Trp bonds also occurs).. Functionally, cleaves peptides in various proteins in a process that requires ATP hydrolysis. Has a chymotrypsin-like activity. Plays a major role in the degradation of misfolded proteins. This Rhodococcus jostii (strain RHA1) protein is ATP-dependent Clp protease proteolytic subunit 3.